The sequence spans 814 residues: DNA gyrase subunit A (814 aa).

The region spanning 32-499 is the Topo IIA-type catalytic domain; it reads LPDVRDGLKP…GVIEFREEDL (468 aa). Tyr120 functions as the O-(5'-phospho-DNA)-tyrosine intermediate in the catalytic mechanism. The short motif at 526-532 is the GyrA-box element; the sequence is QHRAGRG.

The protein belongs to the type II topoisomerase GyrA/ParC subunit family. As to quaternary structure, heterotetramer, composed of two GyrA and two GyrB chains. In the heterotetramer, GyrA contains the active site tyrosine that forms a transient covalent intermediate with DNA, while GyrB binds cofactors and catalyzes ATP hydrolysis.

The protein resides in the cytoplasm. It catalyses the reaction ATP-dependent breakage, passage and rejoining of double-stranded DNA.. Functionally, a type II topoisomerase that negatively supercoils closed circular double-stranded (ds) DNA in an ATP-dependent manner to modulate DNA topology and maintain chromosomes in an underwound state. Negative supercoiling favors strand separation, and DNA replication, transcription, recombination and repair, all of which involve strand separation. Also able to catalyze the interconversion of other topological isomers of dsDNA rings, including catenanes and knotted rings. Type II topoisomerases break and join 2 DNA strands simultaneously in an ATP-dependent manner. The polypeptide is DNA gyrase subunit A (Dehalogenimonas lykanthroporepellens (strain ATCC BAA-1523 / JCM 15061 / BL-DC-9)).